Consider the following 125-residue polypeptide: Putative RNA polymerase sigma-G factor (125 aa).

The protein belongs to the sigma-70 factor family.

Sigma factors are initiation factors that promote the attachment of RNA polymerase to specific initiation sites and are then released. The polypeptide is Putative RNA polymerase sigma-G factor (Bacillus thuringiensis subsp. kurstaki).